The following is a 2329-amino-acid chain: Pre-mRNA-splicing factor 8 homolog (2329 aa).

The interval 1–53 is disordered; it reads MANYGGHPQTEPHAIPDSILEEKSRKWKQLQGKRYSEKKKFGMSDTQKEEMPP. Positions 34 to 53 are enriched in basic and acidic residues; that stretch reads RYSEKKKFGMSDTQKEEMPP. Positions 804–1295 are reverse transcriptase homology domain; that stretch reads TTVHWLESRR…KIQTRIKIGL (492 aa). The segment at 1296-1570 is linker; the sequence is NSKMPSRFPP…TLKISLIQIF (275 aa). Positions 1506–1519 are important for branch point selection; it reads MKFKKLTNAQRSGL. The segment at 1574-1745 is restriction endonuclease homology domain; that stretch reads LWQKIHESVV…LRERIRKGLQ (172 aa). The tract at residues 1760-2013 is RNase H homology domain; sequence NYGELFSNQI…ILGMEISAPS (254 aa). The MPN domain occupies 2096-2227; the sequence is TYILPKNILK…LTAYKLTPSG (132 aa).

As to quaternary structure, part of the U5 snRNP complex and of the U4/U6-U5 tri-snRNP complex.

The protein localises to the nucleus. Functionally, functions as a scaffold that mediates the ordered assembly of spliceosomal proteins and snRNAs. Required for the assembly of the U4/U6-U5 tri-snRNP complex. Functions as a scaffold that positions spliceosomal U2, U5 and U6 snRNAs at splice sites on pre-mRNA substrates, so that splicing can occur. Interacts with both the 5' and the 3' splice site. In Caenorhabditis elegans, this protein is Pre-mRNA-splicing factor 8 homolog (prp-8).